The following is a 491-amino-acid chain: Zinc finger protein 655 (491 aa).

The interval 1-52 (MEEIPAQEAAGSPRVQFQSLETQSECLSPEPQFVQDTDMEQGLTGDGETREE) is disordered. The segment covering 15 to 26 (VQFQSLETQSEC) has biased composition (polar residues). Phosphoserine is present on Gln-60. Residues Lys-77, Lys-190, and Lys-201 each participate in a glycyl lysine isopeptide (Lys-Gly) (interchain with G-Cter in SUMO2) cross-link. C2H2-type zinc fingers lie at residues 212-234 (YKCD…QRIH), 240-262 (YKCK…KRIH), 303-325 (YKCS…QKIH), 330-353 (CKCT…RVHH), 380-402 (YTCS…QRIH), and 408-430 (HECN…HKMH).

The protein belongs to the krueppel C2H2-type zinc-finger protein family. As to quaternary structure, interacts with VAV1 and CDK4. Interacts with INTS13; promoting association with the integrator complex.

Its subcellular location is the nucleus. Probable transcription factor. The polypeptide is Zinc finger protein 655 (Homo sapiens (Human)).